A 120-amino-acid chain; its full sequence is Large ribosomal subunit protein uL18 (120 aa).

The protein belongs to the universal ribosomal protein uL18 family. As to quaternary structure, part of the 50S ribosomal subunit; part of the 5S rRNA/L5/L18/L25 subcomplex. Contacts the 5S and 23S rRNAs.

This is one of the proteins that bind and probably mediate the attachment of the 5S RNA into the large ribosomal subunit, where it forms part of the central protuberance. The protein is Large ribosomal subunit protein uL18 of Sinorhizobium medicae (strain WSM419) (Ensifer medicae).